The primary structure comprises 394 residues: Succinate--CoA ligase [ADP-forming] subunit beta (394 aa).

Residues 9–243 enclose the ATP-grasp domain; the sequence is KDILAGFGIA…YSQLNPLEIA (235 aa). ATP-binding positions include K45, 52–54, E98, V101, and E106; that span reads GRG. Mg(2+) contacts are provided by N198 and D212. Substrate is bound by residues N263 and 320–322; that span reads GIM.

It belongs to the succinate/malate CoA ligase beta subunit family. As to quaternary structure, heterotetramer of two alpha and two beta subunits. Mg(2+) is required as a cofactor.

The enzyme catalyses succinate + ATP + CoA = succinyl-CoA + ADP + phosphate. It carries out the reaction GTP + succinate + CoA = succinyl-CoA + GDP + phosphate. It functions in the pathway carbohydrate metabolism; tricarboxylic acid cycle; succinate from succinyl-CoA (ligase route): step 1/1. Its function is as follows. Succinyl-CoA synthetase functions in the citric acid cycle (TCA), coupling the hydrolysis of succinyl-CoA to the synthesis of either ATP or GTP and thus represents the only step of substrate-level phosphorylation in the TCA. The beta subunit provides nucleotide specificity of the enzyme and binds the substrate succinate, while the binding sites for coenzyme A and phosphate are found in the alpha subunit. This chain is Succinate--CoA ligase [ADP-forming] subunit beta, found in Pelobacter propionicus (strain DSM 2379 / NBRC 103807 / OttBd1).